We begin with the raw amino-acid sequence, 340 residues long: Eukaryotic translation initiation factor 3 subunit I (340 aa).

WD repeat units follow at residues 8-47 (GHERSLNQIKFNRDGDLLFSVAKDKIVCAWWSANGERLGT), 50-91 (GHQG…KVWD), 150-189 (CTESKATVAGWSYLGKYIIAGHEDGSVSQYDGKTGEQLEN), 194-233 (EFDHQINDIQFSQDRTYFITASKDKSAKLISSRNLAILKT), and 291-330 (GHFGPLNTVDVHPNGTAYASGGEDGYVRVHHFDKPYFDFM).

This sequence belongs to the eIF-3 subunit I family. In terms of assembly, component of the eukaryotic translation initiation factor 3 (eIF-3) complex.

Its subcellular location is the cytoplasm. Functionally, component of the eukaryotic translation initiation factor 3 (eIF-3) complex, which is involved in protein synthesis of a specialized repertoire of mRNAs and, together with other initiation factors, stimulates binding of mRNA and methionyl-tRNAi to the 40S ribosome. The eIF-3 complex specifically targets and initiates translation of a subset of mRNAs involved in cell proliferation. This chain is Eukaryotic translation initiation factor 3 subunit I (tif34), found in Neosartorya fischeri (strain ATCC 1020 / DSM 3700 / CBS 544.65 / FGSC A1164 / JCM 1740 / NRRL 181 / WB 181) (Aspergillus fischerianus).